The following is a 220-amino-acid chain: 7-cyano-7-deazaguanine synthase (220 aa).

Position 7–17 (7–17) interacts with ATP; it reads LSGGLDSAVCL. C191, C199, C202, and C205 together coordinate Zn(2+).

The protein belongs to the QueC family. In terms of assembly, homodimer. Requires Zn(2+) as cofactor.

The enzyme catalyses 7-carboxy-7-deazaguanine + NH4(+) + ATP = 7-cyano-7-deazaguanine + ADP + phosphate + H2O + H(+). The protein operates within purine metabolism; 7-cyano-7-deazaguanine biosynthesis. In terms of biological role, catalyzes the ATP-dependent conversion of 7-carboxy-7-deazaguanine (CDG) to 7-cyano-7-deazaguanine (preQ(0)). The polypeptide is 7-cyano-7-deazaguanine synthase (Desulforudis audaxviator (strain MP104C)).